A 246-amino-acid polypeptide reads, in one-letter code: Major pollen allergen Cyn d 1 (246 aa).

N-linked (GlcNAc...) asparagine glycosylation occurs at Asn9. Positions 39–145 (GGACGYKDVD…RRVKCKYPSG (107 aa)) constitute an Expansin-like EG45 domain. In terms of domain architecture, Expansin-like CBD spans 159–240 (HYLALLVKYA…NWKPDTVYTS (82 aa)).

The protein belongs to the expansin family. Expansin B subfamily.

The protein localises to the secreted. This chain is Major pollen allergen Cyn d 1 (CYND1), found in Cynodon dactylon (Bermuda grass).